Here is a 68-residue protein sequence, read N- to C-terminus: MIVSLRCCLLLVALLITVETAIMSKRDIVCSVSGDVACNLECELLHKKKGSCDENGACTCFNKKRETE.

The signal sequence occupies residues 1 to 20; it reads MIVSLRCCLLLVALLITVET. Disulfide bonds link C30–C52, C38–C58, and C42–C60.

Belongs to the invertebrate defensin family. As to expression, expressed by the venom gland.

The protein localises to the secreted. Antibacterial peptide mostly active against Gram-positive bacteria. This chain is U-scoloptoxin(02)-Er1a, found in Ethmostigmus rubripes (Giant centipede).